Reading from the N-terminus, the 263-residue chain is Aquaporin Lacbi1:233199 (263 aa).

The Cytoplasmic portion of the chain corresponds to 1–17 (MFTLAHHRHAIRKPMAE). A helical membrane pass occupies residues 18–38 (FFGVALLVIFGAGAACQVVLS). At 39–44 (TNPNSF) the chain is on the extracellular side. Residues 45–65 (LSINFGWAIGIAMGAWISGSI) traverse the membrane as a helical segment. Over 66 to 88 (SGGHINPAITIAMATYRGFPWRE) the chain is Cytoplasmic. The short motif at 71–73 (NPA) is the NPA 1 element. The helical transmembrane segment at 89–109 (VPSYILAQVLGGVVGAALVYA) threads the bilayer. Residues 110–143 (NYIHAIDVFEGGRHIRTQATASLFATYALPYMTQ) are Extracellular-facing. Residues 144 to 164 (VSCFFSEFLATAVLAMMVLAL) form a helical membrane-spanning segment. The Cytoplasmic segment spans residues 165 to 174 (TDNRNGAPTN). Residues 175–195 (GLSPFALFVLFIGLGASLGME) form a helical membrane-spanning segment. The Extracellular segment spans residues 196 to 227 (TAYALNPARDFGPRLFLAMAGYGKALFNYRSQ). The short motif at 201–203 (NPA) is the NPA 2 element. A helical transmembrane segment spans residues 228 to 248 (YWLWAPIIAPVLGAQAGGLLY). The Cytoplasmic segment spans residues 249 to 263 (DTFLYDGDDSPIKWR).

It belongs to the MIP/aquaporin (TC 1.A.8) family.

The protein resides in the membrane. It catalyses the reaction H2O(in) = H2O(out). In terms of biological role, probable water channel required to facilitate the transport of water across membranes. This is Aquaporin Lacbi1:233199 from Laccaria bicolor (strain S238N-H82 / ATCC MYA-4686) (Bicoloured deceiver).